Here is a 338-residue protein sequence, read N- to C-terminus: Lipoate-protein ligase A (338 aa).

Residues 29-216 (SPDQRVLFLW…AFFAYYDEQV (188 aa)) form the BPL/LPL catalytic domain. Residues arginine 71, 76 to 79 (GAVF), and lysine 134 contribute to the ATP site. Lysine 134 provides a ligand contact to (R)-lipoate.

This sequence belongs to the LplA family. As to quaternary structure, monomer.

It is found in the cytoplasm. It catalyses the reaction L-lysyl-[lipoyl-carrier protein] + (R)-lipoate + ATP = N(6)-[(R)-lipoyl]-L-lysyl-[lipoyl-carrier protein] + AMP + diphosphate + H(+). It participates in protein modification; protein lipoylation via exogenous pathway; protein N(6)-(lipoyl)lysine from lipoate: step 1/2. The protein operates within protein modification; protein lipoylation via exogenous pathway; protein N(6)-(lipoyl)lysine from lipoate: step 2/2. In terms of biological role, catalyzes both the ATP-dependent activation of exogenously supplied lipoate to lipoyl-AMP and the transfer of the activated lipoyl onto the lipoyl domains of lipoate-dependent enzymes. This is Lipoate-protein ligase A from Yersinia pseudotuberculosis serotype IB (strain PB1/+).